A 619-amino-acid chain; its full sequence is ATP-dependent RNA helicase dbp9 (619 aa).

The interval 1–30 (MKRKLDANDVPSTEVAEEKETKDADNTDFE) is disordered. Positions 16–25 (AEEKETKDAD) are enriched in basic and acidic residues. Residues 27–55 (TDFESLNLDPRLRQALIREQFTKPTPVQS) carry the Q motif motif. Positions 58–236 (IPLALEGKDI…GLFCRSPVIL (179 aa)) constitute a Helicase ATP-binding domain. Residue 71–78 (AKTGSGKT) coordinates ATP. The DEAD box motif lies at 184 to 187 (DEAD). The 238-residue stretch at 247-484 (GISQFVVRCA…EVKPYHFEMK (238 aa)) folds into the Helicase C-terminal domain. Disordered stretches follow at residues 339 to 390 (SRTS…GKAK) and 582 to 619 (GDNR…RGRK). Residues 345–362 (KSKEATDGDDEAKDKMGS) show a composition bias toward basic and acidic residues. Basic residues predominate over residues 587–604 (RKAREKNRGKGKGRKPSG).

This sequence belongs to the DEAD box helicase family. DDX56/DBP9 subfamily.

Its subcellular location is the nucleus. The protein resides in the nucleolus. The catalysed reaction is ATP + H2O = ADP + phosphate + H(+). Its function is as follows. ATP-binding RNA helicase involved in the biogenesis of 60S ribosomal subunits and is required for the normal formation of 25S and 5.8S rRNAs. The protein is ATP-dependent RNA helicase dbp9 (dbp9) of Neosartorya fischeri (strain ATCC 1020 / DSM 3700 / CBS 544.65 / FGSC A1164 / JCM 1740 / NRRL 181 / WB 181) (Aspergillus fischerianus).